The primary structure comprises 62 residues: Large ribosomal subunit protein bL28 (62 aa).

This sequence belongs to the bacterial ribosomal protein bL28 family.

The sequence is that of Large ribosomal subunit protein bL28 from Acidothermus cellulolyticus (strain ATCC 43068 / DSM 8971 / 11B).